The chain runs to 279 residues: Protein CMSS1 (279 aa).

A compositionally biased stretch (acidic residues) spans 1–10 (MADDLGDEWW). Residues 1 to 89 (MADDLGDEWW…DVLAKSEPKP (89 aa)) form a disordered region. Polar residues predominate over residues 12–22 (NQPTGAGSSPE). A phosphoserine mark is found at Ser-19 and Ser-24. Residue Arg-167 is modified to Omega-N-methylarginine. Position 212 is a phosphothreonine (Thr-212).

The protein belongs to the CMS1 family.

The chain is Protein CMSS1 (CMSS1) from Homo sapiens (Human).